Consider the following 181-residue polypeptide: NAD(P)H-quinone oxidoreductase subunit 6, chloroplastic (181 aa).

A run of 5 helical transmembrane segments spans residues 13-33 (PILYFLDVGILLGGLGVVFFG), 35-55 (IIYSALFLGVVFVCVALLYLL), 64-84 (AQILIYVGAINVLIVFAIMLI), 98-118 (FGDILSGFSVFGLFSFLIIMI), and 152-172 (LLPFELLSILLLVALVGAITI).

It belongs to the complex I subunit 6 family. As to quaternary structure, NDH is composed of at least 16 different subunits, 5 of which are encoded in the nucleus.

It is found in the plastid. It localises to the chloroplast thylakoid membrane. It carries out the reaction a plastoquinone + NADH + (n+1) H(+)(in) = a plastoquinol + NAD(+) + n H(+)(out). The catalysed reaction is a plastoquinone + NADPH + (n+1) H(+)(in) = a plastoquinol + NADP(+) + n H(+)(out). Its function is as follows. NDH shuttles electrons from NAD(P)H:plastoquinone, via FMN and iron-sulfur (Fe-S) centers, to quinones in the photosynthetic chain and possibly in a chloroplast respiratory chain. The immediate electron acceptor for the enzyme in this species is believed to be plastoquinone. Couples the redox reaction to proton translocation, and thus conserves the redox energy in a proton gradient. The chain is NAD(P)H-quinone oxidoreductase subunit 6, chloroplastic (ndhG) from Staurastrum punctulatum (Green alga).